The following is a 1340-amino-acid chain: WASH complex subunit 2 (1340 aa).

Residues 1-219 (MNRTTPDQEL…VGSDRGSIVD (219 aa)) form a sufficient for interaction with WASHC3, WASHC4 and WASHC5; required for interaction with WASHC1 region. 5 positions are modified to phosphoserine: Ser157, Ser159, Ser204, Ser205, and Ser209. Positions 201-213 (GELSSEEGSVGSD) are enriched in low complexity. The disordered stretch occupies residues 201-404 (GELSSEEGSV…SSSKPGKKIP (204 aa)). Residues 219 to 231 (DTEEEKEEEESDE) show a composition bias toward acidic residues. The segment covering 232–241 (DFAHHSDNDQ) has biased composition (basic and acidic residues). Acidic residues-rich tracts occupy residues 249 to 258 (SDEEEDDDGC) and 265 to 275 (EKEEEDIEDIE). A Phosphoserine modification is found at Ser287. Over residues 292 to 306 (LAARIKGDAVGRVDE) the composition is skewed to basic and acidic residues. Thr330 is modified (phosphothreonine). A compositionally biased stretch (gly residues) spans 354 to 365 (GSGGGLFSGGKG). Residues 355-599 (SGGGLFSGGK…QTLSLQAQGE (245 aa)) are sufficient for interaction with CCDC93. Residues 356–1340 (GGGLFSGGKG…DDPLNAFGGQ (985 aa)) are interaction with VPS35. The LFa 1 motif lies at 366–377 (LFDDEDEESDLF). Ser394 and Ser396 each carry phosphoserine. 3 short sequence motifs (LFa) span residues 410–418 (VFLGDTDVF), 449–462 (LFDDDDGDDDDDFF), and 481–490 (IFGDDEGDLF). 3 disordered regions span residues 421–586 (ASVP…GGTA), 618–663 (SSDE…KASL), and 695–838 (DSGG…STGV). Acidic residues predominate over residues 450–461 (FDDDDGDDDDDF). Positions 506–516 (DENKARAEKKV) are enriched in basic and acidic residues. Low complexity predominate over residues 517-527 (SLPSSKNLKPS). Short sequence motifs (LFa) lie at residues 536-547 (LFSDEEDSEDLF), 571-582 (LFEDEDEEDNLF), and 616-628 (LFSSDEEDQWNIP). Phosphoserine is present on residues Ser538 and Ser543. The segment covering 546-566 (LFSSQSASKLKGAPLLPGKLP) has biased composition (low complexity). Phosphoserine is present on residues Ser618 and Ser619. Residues 636 to 646 (SDSRSKGESRD) show a composition bias toward basic and acidic residues. 3 consecutive short sequence motifs (LFa) follow at residues 663–673 (LFEEDEEDDLF), 689–701 (LFEDDVDSGGSLF), and 725–737 (LFSDEEEKEAQLG). Phosphoserine occurs at positions 727, 751, 786, and 801. The segment covering 740–767 (PVDKKVESAKESLKFGRTDVAESEKEGL) has biased composition (basic and acidic residues). The LFa 11 motif lies at 802-816 (LFDEEEDKMEDQNTI). The span at 822–833 (EVGKGRDPDARP) shows a compositional bias: basic and acidic residues. Short sequence motifs (LFa) lie at residues 838–846 (VFQDEELLF) and 855–861 (DPDVDLF). Residues Ser873 and Ser876 each carry the phosphoserine modification. The LFa 14 signature appears at 877–887 (LFGDDEDDDLF). 2 disordered regions span residues 906 to 950 (DYSV…KEPS) and 987 to 1205 (FPSS…EDED). Over residues 916–930 (KHPETIQGIKEKGIW) the composition is skewed to basic and acidic residues. Residues 936–1340 (QDSSGLAPFK…DDPLNAFGGQ (405 aa)) are interaction with phospholipids. Positions 1027–1045 (NKSRVKMRGKRRPQTRAAR) are enriched in basic residues. Residues 1028–1046 (KSRVKMRGKRRPQTRAARR) are required for interaction with F-actin-capping protein subunit alpha (CAPZA1 or CAPZA2 or CAPZA3). 2 positions are modified to phosphoserine: Ser1053 and Ser1086. Residues 1093 to 1109 (EALAAAAAPWEGGPVPG) show a composition bias toward low complexity. Ser1113 is modified (phosphoserine). Short sequence motifs (LFa) lie at residues 1128–1135 (LFDSGDIF), 1170–1184 (MFPALGEASSDDDLF), 1200–1208 (LLEDEDDLF), 1233–1239 (IFEDDIF), 1261–1269 (LFDDNIDIF), and 1289–1298 (IFDDDMDDIF). Residues Ser1178 and Ser1179 each carry the phosphoserine modification. A disordered region spans residues 1301–1325 (GIQAKTAKPKSRSAQAAPEPRFEHK). The LFa 21 signature appears at 1329 to 1337 (IFDDPLNAF).

It belongs to the FAM21 family. Component of the WASH core complex also described as WASH regulatory complex (SHRC) composed of WASHC1, WASHC2, WASHC3, WASHC4 and WASHC5; in the complex interacts (via N-terminus) directly with WASHC1. The WASH core complex associates with the F-actin-capping protein dimer (formed by CAPZA1, CAPZA2 or CAPZA3 and CAPZB) in a transient or substoichiometric manner which was initially described as WASH complex. Interacts with VPS35; mediates the association with the retromer CSC complex. Interacts with FKBP15. Interacts with CCDC93, CCDC22, VPS35L; indicative for an association of the WASH core complex with the CCC and retriever complexes. Directly interacts with TBC1D23.

Its subcellular location is the early endosome membrane. It is found in the cell membrane. Acts as a component of the WASH core complex that functions as a nucleation-promoting factor (NPF) at the surface of endosomes, where it recruits and activates the Arp2/3 complex to induce actin polymerization, playing a key role in the fission of tubules that serve as transport intermediates during endosome sorting. Mediates the recruitment of the WASH core complex to endosome membranes via binding to phospholipids and VPS35 of the retromer CSC. Mediates the recruitment of the F-actin-capping protein dimer to the WASH core complex probably promoting localized F-actin polymerization needed for vesicle scission. Via its C-terminus binds various phospholipids, most strongly phosphatidylinositol 4-phosphate (PtdIns-(4)P), phosphatidylinositol 5-phosphate (PtdIns-(5)P) and phosphatidylinositol 3,5-bisphosphate (PtdIns-(3,5)P2). Involved in the endosome-to-plasma membrane trafficking and recycling of SNX27-retromer-dependent cargo proteins, such as GLUT1. Required for the association of DNAJC13, ENTR1, ANKRD50 with retromer CSC subunit VPS35. Required for the endosomal recruitment of CCC and retriever complexes subunits COMMD1 and CCDC93 as well as the retrievere complex subunit VPS35L. This is WASH complex subunit 2 from Pongo abelii (Sumatran orangutan).